A 372-amino-acid polypeptide reads, in one-letter code: Methylthioribose-1-phosphate isomerase 1 (372 aa).

Aspartate 254 functions as the Proton donor in the catalytic mechanism.

It belongs to the eIF-2B alpha/beta/delta subunits family. MtnA subfamily.

The protein localises to the cytoplasm. Its subcellular location is the nucleus. The enzyme catalyses 5-(methylsulfanyl)-alpha-D-ribose 1-phosphate = 5-(methylsulfanyl)-D-ribulose 1-phosphate. The protein operates within amino-acid biosynthesis; L-methionine biosynthesis via salvage pathway; L-methionine from S-methyl-5-thio-alpha-D-ribose 1-phosphate: step 1/6. Catalyzes the interconversion of methylthioribose-1-phosphate (MTR-1-P) into methylthioribulose-1-phosphate (MTRu-1-P). This chain is Methylthioribose-1-phosphate isomerase 1, found in Trypanosoma cruzi (strain CL Brener).